We begin with the raw amino-acid sequence, 283 residues long: K88 fimbrial protein AC (283 aa).

Positions 1-21 are cleaved as a signal peptide; that stretch reads MKKTLIALAIAASAASGMAHA.

Belongs to the fimbrial K88 protein family. K88 fimbria, 0.1-1 micrometer in length and 7 nanometers in diameter, is composed of about 100 identical subunits.

It localises to the fimbrium. Its function is as follows. K88 major fimbrial subunit. Fimbriae (also called pili), are polar filaments radiating from the surface of the bacterium to a length of 0.5-1.5 micrometers and numbering 100-300 per cell. They enable bacteria to colonize the epithelium of specific host organs. The protein is K88 fimbrial protein AC (faeG) of Escherichia coli.